The sequence spans 786 residues: DNA ligase (786 aa).

Residues 32–36 (DAEYD), 81–82 (SL), and Glu121 contribute to the NAD(+) site. The N6-AMP-lysine intermediate role is filled by Lys123. Residues Arg144, Glu181, Lys297, and Lys321 each contribute to the NAD(+) site. Residues Cys415, Cys418, Cys445, and Cys451 each contribute to the Zn(2+) site. The 84-residue stretch at 703–786 (AEGLPLAGQT…EQLKSYGIEA (84 aa)) folds into the BRCT domain.

It belongs to the NAD-dependent DNA ligase family. LigA subfamily. The cofactor is Mg(2+). Mn(2+) is required as a cofactor.

The enzyme catalyses NAD(+) + (deoxyribonucleotide)n-3'-hydroxyl + 5'-phospho-(deoxyribonucleotide)m = (deoxyribonucleotide)n+m + AMP + beta-nicotinamide D-nucleotide.. DNA ligase that catalyzes the formation of phosphodiester linkages between 5'-phosphoryl and 3'-hydroxyl groups in double-stranded DNA using NAD as a coenzyme and as the energy source for the reaction. It is essential for DNA replication and repair of damaged DNA. In Ectopseudomonas mendocina (strain ymp) (Pseudomonas mendocina), this protein is DNA ligase.